Consider the following 466-residue polypeptide: 55 kDa erythrocyte membrane protein (466 aa).

Threonine 2 is modified (N-acetylthreonine). Phosphoserine occurs at positions 13 and 19. Threonine 49 carries the post-translational modification Phosphothreonine. Serine 52, serine 57, and serine 110 each carry phosphoserine. The PDZ domain maps to 71 to 152; sequence LIQFEKVTEE…MISLKVIPNQ (82 aa). The SH3 domain occupies 158–228; that stretch reads ALQMFMRAQF…PSPELQEWRV (71 aa). At serine 243 the chain carries Phosphoserine. Positions 268-466 are interaction with PALS1; it reads VVSYEEVVRL…PQWVPVSWVY (199 aa). The Guanylate kinase-like domain occupies 282 to 451; the sequence is RKTLVLIGAS…TLKKLQEAFD (170 aa).

This sequence belongs to the MAGUK family. As to quaternary structure, heterodimer with PALS1. Interacts with DLG5 and NF2. Interacts (via guanylate kinase-like domain) with WHRN (via third PDZ domain). Palmitoylated. Ubiquitous.

Its subcellular location is the cell membrane. The protein resides in the cell projection. The protein localises to the stereocilium. In terms of biological role, essential regulator of neutrophil polarity. Regulates neutrophil polarization by regulating AKT1 phosphorylation through a mechanism that is independent of PIK3CG activity. The protein is 55 kDa erythrocyte membrane protein (MPP1) of Homo sapiens (Human).